The sequence spans 993 residues: MATSSFNINELVASHGDKGLLATALVDKTAHEQLEEQLQHQRRGRKVYIRNVLGVKDSEVIRNRYGGKYDLHLTQQEFAPHGLAGALRLCETLDCLDSFPSSGLRQDLVLDFGGSWVTHYLRGHNVHCCSPCLGIRDKMRHAERLMNMRKIILNDPQQFDGRQPDFCTHPAAECDVQAHFAISIHGGYDMGFRGLCEAMNAHGTTILKGTMMFDGAMMFDDQGVIPELNCQWRKIRSAFSETEDVTPLSGKLNSTVFSRVRKFKTMVAFDFINESTMSYVHDWENIRSFLTDQTYSYRGMTYGIERCVIHAGIMTYKIIGVPGMCPPELIRHCIWFPSIKDYVGLKIPASQDLVEWKTVRYLTSTLRETEEIAMRCYNDKKAWMEQFKVILGVLSAKSSTIVINGMSMQSGERIDINDYHYIGLAILLHTKMKYEQLGKMYDMWNASSISKWFAALTRPLRVFFSSVVHALFPTLRPREEKEFLIKLSTFVTFNEECSFDGGEEWDVISSAAYVATQAVTDGKVLAAQKAEKLAEKLAQPVIEVSDRPEAPSPTPDDPADVCGKEQEVSELDSLSAQTRSPITRVAERATAMLEYAAYEKQLHDTTVSNLKRIWNMAGGDDKRNSLEGNLKFVFDTYFTVDPMVNIHFSTGKWMRPVPEGIVYSVGFNEHGLGPKSDGELYIVNSECVVCNNESLSNVTRSLQAPTGTISQVDGVAGCGKTTAIKSIFEPSTDMVVTANKKSAQDVRMALFKSSDSKEACTFVRTADSVLLNECPTVSRVLVDEVVLLHFGQLCAVMSKLKAVRAICFGDSEQIAFSSRDASFDMRFSKIIPDETSDADTTFRSPQDVVPLVRLMATKALPRGTHSKYTKWVSQSKVKRSVTSRAISSVTLVDLDSSRFYITMTQADKASLISRAKEMNLPKTFWNERIKTVHESQGISEDHVTLVRLKSTKCDLFKQFSYCLVALTRHKVTFRYEHCGILNGDLIAECIARA.

The interval 51–409 (NVLGVKDSEV…TIVINGMSMQ (359 aa)) is methyltransferase. The region spanning 72-290 (HLTQQEFAPH…HDWENIRSFL (219 aa)) is the Alphavirus-like MT domain. A disordered region spans residues 543–576 (EVSDRPEAPSPTPDDPADVCGKEQEVSELDSLSA). One can recognise a (+)RNA virus helicase ATP-binding domain in the interval 684–838 (NSECVVCNNE…KIIPDETSDA (155 aa)). The segment at 712–975 (VDGVAGCGKT…LTRHKVTFRY (264 aa)) is ATP-dependent helicase. 714-721 (GVAGCGKT) lines the ATP pocket. The region spanning 839–993 (DTTFRSPQDV…DLIAECIARA (155 aa)) is the (+)RNA virus helicase C-terminal domain.

Belongs to the bromoviridae replication protein 1a family. In terms of assembly, interacts with RNA-directed RNA polymerase 2a.

Its subcellular location is the host endoplasmic reticulum membrane. Its function is as follows. Involved in the virus replication. Contains a helicase domain and a methyltransferase domain. The methyltransferase domain is probably involved in viral RNA capping. Involved in the formation of ER membrane spherular invaginations in which RNA replication complexes form. This Cucumber mosaic virus (strain Ixora) (CMV) protein is Replication protein 1a.